Here is a 453-residue protein sequence, read N- to C-terminus: Ribosomal protein uS12 methylthiotransferase RimO (453 aa).

One can recognise an MTTase N-terminal domain in the interval 5–120; the sequence is PKVGFVSLGC…VMQAVHSHLP (116 aa). C14, C50, C79, C151, C155, and C158 together coordinate [4Fe-4S] cluster. The 246-residue stretch at 137 to 382 folds into the Radical SAM core domain; the sequence is LTPRHYAYLK…MEVAEEVSAR (246 aa). Residues 385 to 453 enclose the TRAM domain; the sequence is ARKVGKTLKV…ADGHDLWGEV (69 aa).

The protein belongs to the methylthiotransferase family. RimO subfamily. It depends on [4Fe-4S] cluster as a cofactor.

The protein resides in the cytoplasm. The catalysed reaction is L-aspartate(89)-[ribosomal protein uS12]-hydrogen + (sulfur carrier)-SH + AH2 + 2 S-adenosyl-L-methionine = 3-methylsulfanyl-L-aspartate(89)-[ribosomal protein uS12]-hydrogen + (sulfur carrier)-H + 5'-deoxyadenosine + L-methionine + A + S-adenosyl-L-homocysteine + 2 H(+). Its function is as follows. Catalyzes the methylthiolation of an aspartic acid residue of ribosomal protein uS12. The chain is Ribosomal protein uS12 methylthiotransferase RimO from Burkholderia multivorans (strain ATCC 17616 / 249).